Here is a 20-residue protein sequence, read N- to C-terminus: Citrate synthase (20 aa).

The protein belongs to the citrate synthase family. As to quaternary structure, homohexamer.

The catalysed reaction is oxaloacetate + acetyl-CoA + H2O = citrate + CoA + H(+). The protein operates within carbohydrate metabolism; tricarboxylic acid cycle; isocitrate from oxaloacetate: step 1/2. Its activity is regulated as follows. Allosterically inhibited by NADH. This Streptomyces hygroscopicus protein is Citrate synthase (gltA).